The following is a 258-amino-acid chain: Cholera enterotoxin subunit A (258 aa).

Positions M1–A18 are cleaved as a signal peptide. Residues R25 to S28 and M41 to R43 contribute to the NAD(+) site. E130 is a catalytic residue. A disulfide bridge connects residues C205 and C217.

This sequence belongs to the enterotoxin A family. As to quaternary structure, the holotoxin (choleragen) consists of a pentameric ring of B subunits whose central pore is occupied by the A subunit. The A subunit contains two chains, A1 and A2, linked by a disulfide bridge. Interaction with the host protein ARF6 causes a conformation change so that the enterotoxin subunit A1 can bind NAD and catalyze the ADP-ribosylation of the host Gs alpha.

Functionally, the A1 chain catalyzes the ADP-ribosylation of Gs alpha, a GTP-binding regulatory protein, to activate the adenylate cyclase. This leads to an overproduction of cAMP and eventually to a hypersecretion of chloride and bicarbonate followed by water, resulting in the characteristic cholera stool. The A2 chain tethers A1 to the pentameric ring. This is Cholera enterotoxin subunit A (ctxA) from Vibrio cholerae serotype O1 (strain ATCC 39315 / El Tor Inaba N16961).